The following is a 129-amino-acid chain: uncharacterized protein (129 aa).

The interval 44–63 is disordered; the sequence is PYRAADRSNDQDNDRSGGNV. Basic and acidic residues predominate over residues 46–58; sequence RAADRSNDQDNDR. 2 consecutive transmembrane segments (helical) span residues 78 to 98 and 109 to 129; these read IISLFVLPVLLGAAGIIVGYI and AWAMGIGVVSLVLGIFIIPFF.

It localises to the cell membrane. This is an uncharacterized protein from Bacillus subtilis (strain 168).